The following is a 472-amino-acid chain: uncharacterized protein (472 aa).

Composition is skewed to low complexity over residues 1-21 and 63-74; these read MAFSSSSLRRSLKLGRGSRPG and ASSLPAPASSSP. Residues 1-74 form a disordered region; it reads MAFSSSSLRR…SLPAPASSSP (74 aa).

This is an uncharacterized protein from Equus caballus (Horse).